Consider the following 140-residue polypeptide: TPT1-like protein (140 aa).

Residues 6–140 form the TCTP domain; it reads MITYWDLISH…LANFKNYQKT (135 aa).

The protein belongs to the TCTP family.

The sequence is that of TPT1-like protein from Homo sapiens (Human).